The following is a 265-amino-acid chain: Mlc titration factor A (265 aa).

Zn(2+) contacts are provided by His-111, His-148, His-152, and Glu-211.

This sequence belongs to the MtfA family. In terms of assembly, interacts with Mlc. Requires Zn(2+) as cofactor.

The protein localises to the cytoplasm. In terms of biological role, involved in the modulation of the activity of the glucose-phosphotransferase system (glucose-PTS). Interacts with the transcriptional repressor Mlc, preventing its interaction with DNA and leading to the modulation of expression of genes regulated by Mlc, including ptsG, which encodes the PTS system glucose-specific EIICB component. Functionally, shows zinc-dependent metallopeptidase activity. This Escherichia coli (strain 55989 / EAEC) protein is Mlc titration factor A.